Reading from the N-terminus, the 229-residue chain is Large ribosomal subunit protein uL1 (229 aa).

This sequence belongs to the universal ribosomal protein uL1 family. As to quaternary structure, part of the 50S ribosomal subunit.

Functionally, binds directly to 23S rRNA. The L1 stalk is quite mobile in the ribosome, and is involved in E site tRNA release. Protein L1 is also a translational repressor protein, it controls the translation of the L11 operon by binding to its mRNA. The protein is Large ribosomal subunit protein uL1 of Gemmatimonas aurantiaca (strain DSM 14586 / JCM 11422 / NBRC 100505 / T-27).